Consider the following 434-residue polypeptide: Enolase (434 aa).

Substrate contacts are provided by H158 and E167. E210 (proton donor) is an active-site residue. D245, E294, and D319 together coordinate Mg(2+). 2 residues coordinate substrate: E294 and D319. Residue K344 is the Proton acceptor of the active site. Residues 371 to 374 (SHRS) and K395 contribute to the substrate site.

It belongs to the enolase family. As to quaternary structure, homodimer. Requires Mg(2+) as cofactor.

It localises to the cytoplasm. It catalyses the reaction (2R)-2-phosphoglycerate = phosphoenolpyruvate + H2O. It participates in carbohydrate degradation; glycolysis; pyruvate from D-glyceraldehyde 3-phosphate: step 4/5. In Schistosoma japonicum (Blood fluke), this protein is Enolase (ENO).